Reading from the N-terminus, the 396-residue chain is 1-deoxy-D-xylulose 5-phosphate reductoisomerase (396 aa).

Residues threonine 10, glycine 11, serine 12, isoleucine 13, and asparagine 123 each coordinate NADPH. Lysine 124 is a binding site for 1-deoxy-D-xylulose 5-phosphate. Glutamate 125 provides a ligand contact to NADPH. Mn(2+) is bound at residue aspartate 149. 4 residues coordinate 1-deoxy-D-xylulose 5-phosphate: serine 150, glutamate 151, serine 185, and histidine 208. Glutamate 151 is a binding site for Mn(2+). NADPH is bound at residue glycine 214. Residues serine 221, asparagine 226, lysine 227, and glutamate 230 each contribute to the 1-deoxy-D-xylulose 5-phosphate site. Glutamate 230 is a Mn(2+) binding site.

Belongs to the DXR family. Mg(2+) is required as a cofactor. Requires Mn(2+) as cofactor.

The catalysed reaction is 2-C-methyl-D-erythritol 4-phosphate + NADP(+) = 1-deoxy-D-xylulose 5-phosphate + NADPH + H(+). Its pathway is isoprenoid biosynthesis; isopentenyl diphosphate biosynthesis via DXP pathway; isopentenyl diphosphate from 1-deoxy-D-xylulose 5-phosphate: step 1/6. Catalyzes the NADPH-dependent rearrangement and reduction of 1-deoxy-D-xylulose-5-phosphate (DXP) to 2-C-methyl-D-erythritol 4-phosphate (MEP). This is 1-deoxy-D-xylulose 5-phosphate reductoisomerase from Shewanella sp. (strain MR-4).